The chain runs to 352 residues: Type II restriction enzyme HaeII (352 aa).

The enzyme catalyses Endonucleolytic cleavage of DNA to give specific double-stranded fragments with terminal 5'-phosphates.. Functionally, a P subtype restriction enzyme that recognizes the double-stranded sequence 5'-RGCGCY-3' and cleaves after C-5. In Haemophilus aegyptius, this protein is Type II restriction enzyme HaeII (haeIIR).